A 278-amino-acid polypeptide reads, in one-letter code: Large ribosomal subunit protein uL2 (278 aa).

2 stretches are compositionally biased toward basic residues: residues 210–219 (RKRWLGKRPQ) and 252–263 (KKSRGIKTRNSK). The tract at residues 210–278 (RKRWLGKRPQ…LIIRHRKGNK (69 aa)) is disordered.

The protein belongs to the universal ribosomal protein uL2 family. In terms of assembly, part of the 50S ribosomal subunit. Forms a bridge to the 30S subunit in the 70S ribosome.

Functionally, one of the primary rRNA binding proteins. Required for association of the 30S and 50S subunits to form the 70S ribosome, for tRNA binding and peptide bond formation. It has been suggested to have peptidyltransferase activity; this is somewhat controversial. Makes several contacts with the 16S rRNA in the 70S ribosome. The protein is Large ribosomal subunit protein uL2 of Lactobacillus gasseri (strain ATCC 33323 / DSM 20243 / BCRC 14619 / CIP 102991 / JCM 1131 / KCTC 3163 / NCIMB 11718 / NCTC 13722 / AM63).